The following is a 284-amino-acid chain: uncharacterized protein (284 aa).

Residues 1 to 10 are compositionally biased toward polar residues; the sequence is MSNSVTNFEM. Residues 1 to 28 are disordered; the sequence is MSNSVTNFEMSSVLPGKKPCQGKNNESQ.

This is an uncharacterized protein from Escherichia coli (strain K12).